Here is a 266-residue protein sequence, read N- to C-terminus: Thymidylate synthase (266 aa).

DUMP contacts are provided by residues Arg21 and 127–128 (RR). Catalysis depends on Cys147, which acts as the Nucleophile. DUMP contacts are provided by residues 168-171 (RSAD), Asn179, and 209-211 (HIY). Asp171 is a (6R)-5,10-methylene-5,6,7,8-tetrahydrofolate binding site. Residue Ala265 coordinates (6R)-5,10-methylene-5,6,7,8-tetrahydrofolate.

This sequence belongs to the thymidylate synthase family. Bacterial-type ThyA subfamily. In terms of assembly, homodimer.

The protein localises to the cytoplasm. The catalysed reaction is dUMP + (6R)-5,10-methylene-5,6,7,8-tetrahydrofolate = 7,8-dihydrofolate + dTMP. It participates in pyrimidine metabolism; dTTP biosynthesis. Its function is as follows. Catalyzes the reductive methylation of 2'-deoxyuridine-5'-monophosphate (dUMP) to 2'-deoxythymidine-5'-monophosphate (dTMP) while utilizing 5,10-methylenetetrahydrofolate (mTHF) as the methyl donor and reductant in the reaction, yielding dihydrofolate (DHF) as a by-product. This enzymatic reaction provides an intracellular de novo source of dTMP, an essential precursor for DNA biosynthesis. In Brachyspira hyodysenteriae (strain ATCC 49526 / WA1), this protein is Thymidylate synthase.